Here is a 388-residue protein sequence, read N- to C-terminus: Lipoyl synthase, mitochondrial (388 aa).

A mitochondrion-targeting transit peptide spans 1-18; it reads MRLTTVQRRFLVSTKAKV. Residues 22–39 are compositionally biased toward low complexity; it reads SISSTANTGSASAGAPNG. Residues 22-43 are disordered; it reads SISSTANTGSASAGAPNGQTRR. 7 residues coordinate [4Fe-4S] cluster: C120, C125, C131, C151, C155, C158, and S366. The region spanning 134-355 is the Radical SAM core domain; the sequence is GKDKSKATAT…KDKAKEMGFL (222 aa).

This sequence belongs to the radical SAM superfamily. Lipoyl synthase family. It depends on [4Fe-4S] cluster as a cofactor.

It localises to the mitochondrion. It carries out the reaction [[Fe-S] cluster scaffold protein carrying a second [4Fe-4S](2+) cluster] + N(6)-octanoyl-L-lysyl-[protein] + 2 oxidized [2Fe-2S]-[ferredoxin] + 2 S-adenosyl-L-methionine + 4 H(+) = [[Fe-S] cluster scaffold protein] + N(6)-[(R)-dihydrolipoyl]-L-lysyl-[protein] + 4 Fe(3+) + 2 hydrogen sulfide + 2 5'-deoxyadenosine + 2 L-methionine + 2 reduced [2Fe-2S]-[ferredoxin]. The protein operates within protein modification; protein lipoylation via endogenous pathway; protein N(6)-(lipoyl)lysine from octanoyl-[acyl-carrier-protein]: step 2/2. In terms of biological role, catalyzes the radical-mediated insertion of two sulfur atoms into the C-6 and C-8 positions of the octanoyl moiety bound to the lipoyl domains of lipoate-dependent enzymes, thereby converting the octanoylated domains into lipoylated derivatives. The protein is Lipoyl synthase, mitochondrial of Candida glabrata (strain ATCC 2001 / BCRC 20586 / JCM 3761 / NBRC 0622 / NRRL Y-65 / CBS 138) (Yeast).